A 184-amino-acid chain; its full sequence is ATP-dependent protease subunit HslV (184 aa).

Thr-8 is a catalytic residue. Residues Gly-165, Asp-168, and Thr-171 each contribute to the Na(+) site.

This sequence belongs to the peptidase T1B family. HslV subfamily. As to quaternary structure, a double ring-shaped homohexamer of HslV is capped on each side by a ring-shaped HslU homohexamer. The assembly of the HslU/HslV complex is dependent on binding of ATP.

The protein localises to the cytoplasm. The catalysed reaction is ATP-dependent cleavage of peptide bonds with broad specificity.. With respect to regulation, allosterically activated by HslU binding. Its function is as follows. Protease subunit of a proteasome-like degradation complex believed to be a general protein degrading machinery. This Pediococcus pentosaceus (strain ATCC 25745 / CCUG 21536 / LMG 10740 / 183-1w) protein is ATP-dependent protease subunit HslV.